Consider the following 132-residue polypeptide: Small ribosomal subunit protein uS11 (132 aa).

The protein belongs to the universal ribosomal protein uS11 family. Part of the 30S ribosomal subunit. Interacts with proteins S7 and S18. Binds to IF-3.

Located on the platform of the 30S subunit, it bridges several disparate RNA helices of the 16S rRNA. Forms part of the Shine-Dalgarno cleft in the 70S ribosome. The sequence is that of Small ribosomal subunit protein uS11 from Leifsonia xyli subsp. xyli (strain CTCB07).